The sequence spans 504 residues: Probable periplasmic serine endoprotease DegP-like (504 aa).

The signal sequence occupies residues 1–26 (MLKTTTVAGLAAVLLTTGLPAEVAQS). Over residues 102–118 (RADRWRDRRGPRGEGRL) the composition is skewed to basic and acidic residues. Residues 102-122 (RADRWRDRRGPRGEGRLRPRA) are disordered. Residues 113–286 (RGEGRLRPRA…PASVAKDVVD (174 aa)) are serine protease. Residues histidine 140, aspartate 170, and serine 244 each act as charge relay system in the active site. Substrate is bound by residues 242–244 (GNS) and 299–303 (LGVQI). 2 consecutive PDZ domains span residues 287–378 (SLIK…LWRS) and 401–491 (ATGE…IEAQ). Disordered stretches follow at residues 389-411 (GTLPSDAKEPAPATGEAQPDEGQ) and 428-447 (EDGKGVTIASVDPDSDAGDR).

The protein belongs to the peptidase S1C family.

It localises to the periplasm. The catalysed reaction is Acts on substrates that are at least partially unfolded. The cleavage site P1 residue is normally between a pair of hydrophobic residues, such as Val-|-Val.. Functionally, might be efficient in the degradation of transiently denatured and unfolded proteins which accumulate in the periplasm following stress conditions. In Rhizobium meliloti (strain 1021) (Ensifer meliloti), this protein is Probable periplasmic serine endoprotease DegP-like (degP1).